The primary structure comprises 176 residues: Probable DNA-directed RNA polymerase subunit delta (176 aa).

Residues 14–81 (LSLIDVAHFI…GNNMWGLRAW (68 aa)) form the HTH HARE-type domain. 2 disordered regions span residues 91 to 119 (VQTQTTPKKKRKSDDDDDEEILDDDVDYD) and 140 to 176 (DEDEDEDDHLPDGIEGDLATVEDDYTDGDYTEDPEDK). 2 stretches are compositionally biased toward acidic residues: residues 105–119 (DDDDEEILDDDVDYD) and 159–176 (TVEDDYTDGDYTEDPEDK).

Belongs to the RpoE family. RNAP is composed of a core of 2 alpha, a beta and a beta' subunits. The core is associated with a delta subunit and one of several sigma factors.

Functionally, participates in both the initiation and recycling phases of transcription. In the presence of the delta subunit, RNAP displays an increased specificity of transcription, a decreased affinity for nucleic acids, and an increased efficiency of RNA synthesis because of enhanced recycling. This Listeria welshimeri serovar 6b (strain ATCC 35897 / DSM 20650 / CCUG 15529 / CIP 8149 / NCTC 11857 / SLCC 5334 / V8) protein is Probable DNA-directed RNA polymerase subunit delta.